Reading from the N-terminus, the 1402-residue chain is DNA-directed RNA polymerase subunit beta' (1402 aa).

Cys-71, Cys-73, Cys-86, and Cys-89 together coordinate Zn(2+). Mg(2+) contacts are provided by Asp-462, Asp-464, and Asp-466. Residues Cys-808, Cys-881, Cys-888, and Cys-891 each contribute to the Zn(2+) site.

The protein belongs to the RNA polymerase beta' chain family. In terms of assembly, the RNAP catalytic core consists of 2 alpha, 1 beta, 1 beta' and 1 omega subunit. When a sigma factor is associated with the core the holoenzyme is formed, which can initiate transcription. The cofactor is Mg(2+). Requires Zn(2+) as cofactor.

It catalyses the reaction RNA(n) + a ribonucleoside 5'-triphosphate = RNA(n+1) + diphosphate. In terms of biological role, DNA-dependent RNA polymerase catalyzes the transcription of DNA into RNA using the four ribonucleoside triphosphates as substrates. In Hyphomonas neptunium (strain ATCC 15444), this protein is DNA-directed RNA polymerase subunit beta'.